Consider the following 96-residue polypeptide: Small, acid-soluble spore protein gamma-type (96 aa).

The segment covering 1–15 has biased composition (polar residues); the sequence is MNTKNFTPQESRTNA. Positions 1–96 are disordered; the sequence is MNTKNFTPQE…SEAKKRNNQQ (96 aa). The segment covering 16–27 has biased composition (low complexity); the sequence is QQVRQQNQQSAQ. Residues 28–41 are compositionally biased toward polar residues; that stretch reads GTSSGFATEFASET. 2 consecutive repeats follow at residues 28-52 and 61-87; these read GTSSGFATEFASETNAQQVRQQNQQ and GATAGGFNTEFASETNVQQVRQQNQQS. 2 stretches are compositionally biased toward low complexity: residues 42–57 and 76–86; these read NAQQVRQQNQQSAQAN and NVQQVRQQNQQ.

This sequence belongs to the gamma-type SASP family.

Functionally, SASP are proteins degraded in the first minutes of spore germination and provide amino acids for both new protein synthesis and metabolism. These proteins may be involved in dormant spore's high resistance to UV light. In Laceyella sacchari (Thermoactinomyces thalpophilus), this protein is Small, acid-soluble spore protein gamma-type.